A 458-amino-acid polypeptide reads, in one-letter code: Exodeoxyribonuclease 7 large subunit (458 aa).

This sequence belongs to the XseA family. As to quaternary structure, heterooligomer composed of large and small subunits.

The protein localises to the cytoplasm. The enzyme catalyses Exonucleolytic cleavage in either 5'- to 3'- or 3'- to 5'-direction to yield nucleoside 5'-phosphates.. Functionally, bidirectionally degrades single-stranded DNA into large acid-insoluble oligonucleotides, which are then degraded further into small acid-soluble oligonucleotides. The polypeptide is Exodeoxyribonuclease 7 large subunit (Yersinia pseudotuberculosis serotype O:1b (strain IP 31758)).